The sequence spans 219 residues: Ribonuclease HII (219 aa).

In terms of domain architecture, RNase H type-2 spans 10 to 219; that stretch reads HLEAGTDEAG…LLPEQTVLDL (210 aa). The a divalent metal cation site is built by D16, E17, and D108.

This sequence belongs to the RNase HII family. Mn(2+) serves as cofactor. Requires Mg(2+) as cofactor.

It is found in the cytoplasm. It catalyses the reaction Endonucleolytic cleavage to 5'-phosphomonoester.. In terms of biological role, endonuclease that specifically degrades the RNA of RNA-DNA hybrids. This chain is Ribonuclease HII, found in Flavobacterium psychrophilum (strain ATCC 49511 / DSM 21280 / CIP 103535 / JIP02/86).